Reading from the N-terminus, the 1237-residue chain is GTPase activating protein BUD2 (1237 aa).

Residues 79 to 110 (GSGKSSISQPPPTTSTRRNLLRKSSNLNSSDQ) show a composition bias toward low complexity. The interval 79-124 (GSGKSSISQPPPTTSTRRNLLRKSSNLNSSDQSHSKSSEDNEHQPP) is disordered. Positions 111–121 (SHSKSSEDNEH) are enriched in basic and acidic residues. One can recognise a C2 domain in the interval 381–503 (NVEHPQLYDF…KQIKTTSTIM (123 aa)). Positions 637-905 (NSQDQAVSNS…PEIYDYFDKL (269 aa)) constitute a Ras-GAP domain. 2 disordered regions span residues 721 to 762 (SIHE…ERER) and 969 to 1007 (NNNG…PDLD). Acidic residues predominate over residues 735–754 (DVSDDDDDDDDNSSDDDADY). Residues 986-996 (RDMEREQDRSR) are compositionally biased toward basic and acidic residues. Residues 1065–1093 (NITLKDIQKQSTKIMNKIQELEIYLENYE) adopt a coiled-coil conformation. Residues 1170–1204 (NGGMGNRNGHDVNGHNNNNNNNNNNTGDGYNETDR) are disordered. Positions 1183–1199 (GHNNNNNNNNNNTGDGY) are enriched in low complexity.

It is found in the cytoplasm. The protein resides in the cell cortex. The protein localises to the cell tip. It localises to the cell septum. Its function is as follows. GTPase activating protein (GAP) for RSR1 which is involved in the polarization of yeast and hyphal cells. Directs the site of new daughter cell growth in yeast and hyphal cells. Important for hyphae to maintain linear growth and necessary for hyphal responses to directional cues in the environment (tropisms). Required for correct localization of the septin rings and stabilization of the polarisome at hyphal tips. Involved in cell adhesion. This chain is GTPase activating protein BUD2 (BUD2), found in Candida albicans (strain SC5314 / ATCC MYA-2876) (Yeast).